Consider the following 210-residue polypeptide: Probable GTP-binding protein EngB (210 aa).

The EngB-type G domain maps to 25 to 199 (TGIEVAFAGR…RQKLDTWFNE (175 aa)). GTP-binding positions include 33-40 (GRSNAGKS), 60-64 (GRTQL), 78-81 (DLPG), 145-148 (TKAD), and 178-180 (FSS). Mg(2+) is bound by residues Ser40 and Thr62.

Belongs to the TRAFAC class TrmE-Era-EngA-EngB-Septin-like GTPase superfamily. EngB GTPase family. Requires Mg(2+) as cofactor.

Functionally, necessary for normal cell division and for the maintenance of normal septation. The sequence is that of Probable GTP-binding protein EngB from Escherichia coli O157:H7.